A 341-amino-acid chain; its full sequence is Outer membrane protein U (341 aa).

Residues 1-21 form the signal peptide; the sequence is MNKTLIALAVSAAAVATGAYA.

It belongs to the Gram-negative porin family. Homotrimer.

It is found in the cell outer membrane. Forms pores that allow passive diffusion of small molecules across the outer membrane. The polypeptide is Outer membrane protein U (ompU) (Vibrio cholerae serotype O1 (strain ATCC 39315 / El Tor Inaba N16961)).